A 464-amino-acid chain; its full sequence is GTPase Der (464 aa).

EngA-type G domains are found at residues 3 to 166 (ALVA…PVLE) and 177 to 350 (LQFA…QSAN). GTP is bound by residues 9–16 (GRPNVGKS), 56–60 (DTGGV), 118–121 (NKAE), 183–190 (GRPNVGKS), 230–234 (DTAGI), and 295–298 (NKWD). The KH-like domain occupies 351-435 (SHLPTGELNR…PIALEFRTVK (85 aa)).

Belongs to the TRAFAC class TrmE-Era-EngA-EngB-Septin-like GTPase superfamily. EngA (Der) GTPase family. In terms of assembly, associates with the 50S ribosomal subunit.

Functionally, GTPase that plays an essential role in the late steps of ribosome biogenesis. The protein is GTPase Der of Nitrosococcus oceani (strain ATCC 19707 / BCRC 17464 / JCM 30415 / NCIMB 11848 / C-107).